A 232-amino-acid polypeptide reads, in one-letter code: Large ribosomal subunit protein uL1 (232 aa).

It belongs to the universal ribosomal protein uL1 family. In terms of assembly, part of the 50S ribosomal subunit.

Its function is as follows. Binds directly to 23S rRNA. The L1 stalk is quite mobile in the ribosome, and is involved in E site tRNA release. In terms of biological role, protein L1 is also a translational repressor protein, it controls the translation of the L11 operon by binding to its mRNA. The protein is Large ribosomal subunit protein uL1 of Xanthobacter autotrophicus (strain ATCC BAA-1158 / Py2).